Here is an 804-residue protein sequence, read N- to C-terminus: Phenylalanine--tRNA ligase beta subunit (804 aa).

Residues 38 to 148 (RAAFRAFTIA…ENAPVGTSFA (111 aa)) form the tRNA-binding domain. Positions 401 to 476 (HTARVIDFPV…RIHGINRIDP (76 aa)) constitute a B5 domain. Residues D454, D460, E463, and E464 each coordinate Mg(2+). The region spanning 710–803 (SLFQSLKRDY…VAKQTGGVLR (94 aa)) is the FDX-ACB domain.

Belongs to the phenylalanyl-tRNA synthetase beta subunit family. Type 1 subfamily. Tetramer of two alpha and two beta subunits. Mg(2+) is required as a cofactor.

It is found in the cytoplasm. It carries out the reaction tRNA(Phe) + L-phenylalanine + ATP = L-phenylalanyl-tRNA(Phe) + AMP + diphosphate + H(+). The protein is Phenylalanine--tRNA ligase beta subunit of Brucella melitensis biotype 1 (strain ATCC 23456 / CCUG 17765 / NCTC 10094 / 16M).